We begin with the raw amino-acid sequence, 164 residues long: Histone H1 (164 aa).

The span at 1–10 (MAPRSSTSKS) shows a compositional bias: polar residues. Residues 1-164 (MAPRSSTSKS…KKSSKPAKKN (164 aa)) form a disordered region. Residues 16 to 27 (KDHKKAPIKKAI) are compositionally biased toward basic residues. Residues Thr-47 and Thr-54 each carry the phosphothreonine modification. Basic and acidic residues-rich tracts occupy residues 49–61 (VKKD…ADTK), 69–89 (TMKE…GDKK), and 117–156 (TKKE…DAKK).

Cell-growth/division-associated phosphorylation by a CDC2-like kinase.

It localises to the nucleus. It is found in the chromosome. In terms of biological role, histones H1 are necessary for the condensation of nucleosome chains into higher-order structures. The chain is Histone H1 (HHO) from Tetrahymena thermophila (strain SB210).